The following is a 552-amino-acid chain: Iduronate 2-sulfatase (552 aa).

The signal sequence occupies residues 1–29 (MSPPPPPPIWRQLSFSLLLGSFCIALESA). A propeptide spanning residues 30–35 (AQGNSA) is cleaved from the precursor. 3 residues coordinate Ca(2+): D47, D48, and C86. C86 serves as the catalytic Nucleophile. A 3-oxoalanine (Cys) modification is found at C86. N117 is a glycosylation site (N-linked (GlcNAc...) asparagine). Residue H140 is part of the active site. N146 carries N-linked (GlcNAc...) asparagine glycosylation. C173 and C186 are joined by a disulfide. N-linked (GlcNAc...) asparagine glycosylation is found at N248 and N282. Residues D336 and H337 each contribute to the Ca(2+) site. Residues C424 and C434 are joined by a disulfide bond. N-linked (GlcNAc...) asparagine glycosylation is found at N515 and N539.

It belongs to the sulfatase family. In terms of assembly, monomer. The 58-kDa mature form is composed of two chains resulting from proteolitic processing, the 42-kDa chain and the 14-kDa chain that remain stably associated and form the 58-kDa intermediate form which is enzymatically active. Requires Ca(2+) as cofactor. Post-translationally, synthesized as a 75-kDa precursor form in the endoplasmic reticulum (ER), and then processed by proteolytic cleavage through various intermediates to yield a 55-kDa mature form, with the release of an 18 kDa polypeptide. The conversion to 3-oxoalanine (also known as C-formylglycine, FGly), of a serine or cysteine residue in prokaryotes and of a cysteine residue in eukaryotes, is critical for catalytic activity. Found to be expressed in alpha and beta pancreatic cells.

It is found in the lysosome. It carries out the reaction Hydrolysis of the 2-sulfate groups of the L-iduronate 2-sulfate units of dermatan sulfate, heparan sulfate and heparin.. Functionally, lysosomal enzyme involved in the degradation pathway of dermatan sulfate and heparan sulfate. The sequence is that of Iduronate 2-sulfatase (Ids) from Mus musculus (Mouse).